We begin with the raw amino-acid sequence, 200 residues long: dITP/XTP pyrophosphatase (200 aa).

A substrate-binding site is contributed by 7 to 12 (TQNKRK). Mg(2+)-binding residues include E42 and D71. D71 (proton acceptor) is an active-site residue. Substrate contacts are provided by residues S72, 156-159 (FGYD), K179, and 184-185 (HR).

It belongs to the HAM1 NTPase family. As to quaternary structure, homodimer. Mg(2+) is required as a cofactor.

It carries out the reaction XTP + H2O = XMP + diphosphate + H(+). The catalysed reaction is dITP + H2O = dIMP + diphosphate + H(+). The enzyme catalyses ITP + H2O = IMP + diphosphate + H(+). In terms of biological role, pyrophosphatase that catalyzes the hydrolysis of nucleoside triphosphates to their monophosphate derivatives, with a high preference for the non-canonical purine nucleotides XTP (xanthosine triphosphate), dITP (deoxyinosine triphosphate) and ITP. Seems to function as a house-cleaning enzyme that removes non-canonical purine nucleotides from the nucleotide pool, thus preventing their incorporation into DNA/RNA and avoiding chromosomal lesions. The sequence is that of dITP/XTP pyrophosphatase from Malacoplasma penetrans (strain HF-2) (Mycoplasma penetrans).